Consider the following 468-residue polypeptide: Tyrosine phenol-lyase (468 aa).

Lysine 260 carries the N6-(pyridoxal phosphate)lysine modification.

Belongs to the beta-eliminating lyase family. Homotetramer. The cofactor is pyridoxal 5'-phosphate.

It catalyses the reaction L-tyrosine + H2O = phenol + pyruvate + NH4(+). This Lacrimispora saccharolytica (strain ATCC 35040 / DSM 2544 / NRCC 2533 / WM1) (Clostridium saccharolyticum) protein is Tyrosine phenol-lyase.